A 491-amino-acid polypeptide reads, in one-letter code: Cytochrome P450 monooxygenase 521A1 (491 aa).

The chain crosses the membrane as a helical span at residues 1-21; that stretch reads MILLTLLYLIIFYIIIDFIKK. Cys-438 serves as a coordination point for heme.

It belongs to the cytochrome P450 family. Heme serves as cofactor.

Its subcellular location is the membrane. The catalysed reaction is discoidol + reduced [NADPH--hemoprotein reductase] + O2 = discodiene + acetone + oxidized [NADPH--hemoprotein reductase] + 2 H2O + H(+). Its pathway is sesquiterpene biosynthesis. Cytochrome P450 monooxygenase; part of the gene cluster that mediates the biosynthesis of the trisnorsesquiterpene discodiene which has a function during later stages of multicellular development, during the transition from fingers to Mexican hats. The terpene synthase tps8 converts its substrate farnesyl diphosphate (FDP) into the bicyclic sesquiterpene alcohol discoidol. The cytochrome P450 monooxygenase cyp521A1 then catalyzes the oxidative degradation of discoidol to form the trisnorsesquiterpene discodiene. In Dictyostelium discoideum (Social amoeba), this protein is Cytochrome P450 monooxygenase 521A1 (cyp521A1).